Consider the following 204-residue polypeptide: FMN-dependent NADH:quinone oxidoreductase 5 (204 aa).

An FMN-binding site is contributed by Ser10.

Belongs to the azoreductase type 1 family. In terms of assembly, homodimer. FMN is required as a cofactor.

The catalysed reaction is 2 a quinone + NADH + H(+) = 2 a 1,4-benzosemiquinone + NAD(+). It catalyses the reaction N,N-dimethyl-1,4-phenylenediamine + anthranilate + 2 NAD(+) = 2-(4-dimethylaminophenyl)diazenylbenzoate + 2 NADH + 2 H(+). Functionally, quinone reductase that provides resistance to thiol-specific stress caused by electrophilic quinones. In terms of biological role, also exhibits azoreductase activity. Catalyzes the reductive cleavage of the azo bond in aromatic azo compounds to the corresponding amines. The polypeptide is FMN-dependent NADH:quinone oxidoreductase 5 (Burkholderia lata (strain ATCC 17760 / DSM 23089 / LMG 22485 / NCIMB 9086 / R18194 / 383)).